The chain runs to 295 residues: Nucleotide-binding protein YvcJ (295 aa).

An ATP-binding site is contributed by 16–23 (GMSGAGKT). 67-70 (DLRG) lines the GTP pocket.

The protein belongs to the RapZ-like family.

Displays ATPase and GTPase activities. Can also hydrolyze pNPP. May affect the expression of competence via the phosphorylation of a cellular component. This Bacillus subtilis (strain 168) protein is Nucleotide-binding protein YvcJ (yvcJ).